A 54-amino-acid polypeptide reads, in one-letter code: Large ribosomal subunit protein bL33 (54 aa).

Belongs to the bacterial ribosomal protein bL33 family.

This is Large ribosomal subunit protein bL33 from Xylella fastidiosa (strain M23).